Consider the following 411-residue polypeptide: Thyroxine-binding globulin (411 aa).

Residues Met1 to Cys15 form the signal peptide. Asn34, Asn97, Asn163, and Asn251 each carry an N-linked (GlcNAc...) asparagine glycan. Positions 291 and 394 each coordinate thyroxine.

This sequence belongs to the serpin family. As to expression, expressed by the liver and secreted in plasma.

The protein localises to the secreted. Major thyroid hormone transport protein in serum. This is Thyroxine-binding globulin (SERPINA7) from Bos taurus (Bovine).